The primary structure comprises 235 residues: Protein GMH1 homolog (235 aa).

Topologically, residues 1 to 54 (MSRSFRNGFRLLKLSQMDFERAWWDMANLFRAPRRVYRSITLRKQNINRYGRED) are cytoplasmic. The helical transmembrane segment at 55–75 (FSFIVLFSCMIVISALLWALF) threads the bilayer. At 76–88 (YMNTPKGYVTTIT) the chain is on the lumenal side. The helical transmembrane segment at 89–109 (FMLFVDFGAVGVIMATMYYFI) threads the bilayer. Over 110–140 (AKRFLMKSNDTILSSTDYQLEWNYCFDVHCN) the chain is Cytoplasmic. The chain crosses the membrane as a helical span at residues 141–161 (SFFPSFVLLYVIQLFLLPVIT). The Lumenal segment spans residues 162–175 (RDNFISLFMGNTLY). Residues 176–196 (LVALCYYSYLTFIGYQILPFL) traverse the membrane as a helical segment. At 197 to 201 (KNTHA) the chain is on the cytoplasmic side. The chain crosses the membrane as a helical span at residues 202 to 222 (LLLPIPMFFIMWALSLLGFNV). The Lumenal segment spans residues 223–235 (PKHVVDVYFGKSA).

It belongs to the unc-50 family.

The protein localises to the endoplasmic reticulum membrane. In terms of biological role, has a role in meiosis. This chain is Protein GMH1 homolog (mug16), found in Schizosaccharomyces pombe (strain 972 / ATCC 24843) (Fission yeast).